A 163-amino-acid polypeptide reads, in one-letter code: EF-hand calcium-binding domain-containing protein 11 (163 aa).

3 consecutive EF-hand domains span residues 18–53 (SEHR…LFGY), 91–126 (RYRN…VAPK), and 127–162 (LPER…GQKE). Positions 140, 142, 144, 146, and 151 each coordinate Ca(2+).

This is EF-hand calcium-binding domain-containing protein 11 (EFCAB11) from Homo sapiens (Human).